We begin with the raw amino-acid sequence, 315 residues long: p-hydroxyphenylacetate 3-hydroxylase, reductase component (315 aa).

The protein belongs to the non-flavoprotein flavin reductase family. Homodimer. The p-hydroxyphenylacetate 3-hydroxylase (HpaH) is composed of an oxygenase component C2 and a reductase component C1.

It carries out the reaction a reduced flavin + NAD(+) = an oxidized flavin + NADH + 2 H(+). Its pathway is aromatic compound metabolism; 4-hydroxyphenylacetate degradation; pyruvate and succinate semialdehyde from 4-hydroxyphenylacetate: step 1/7. With respect to regulation, flavin concentrations greater than 15 uM do not inhibit the NADH oxidation activity of the reductase component C1 but do affect the hydroxylation activity of the C1-C2 complex. Maximal reductase activity is achieved only upon HPA binding to the reductase component C1 before interaction with NADH. HPA stimulates the rates of both the reduction of FMN and release of reduced FMN from the reductase component. Functionally, reductase component of a two-component system that supplies reduced FMN (FMNH2) to the oxygenase component to catalyze the hydroxylation of 4-hydroxyphenylacetic acid, leading to the production of 3,4-dihydroxyphenylacetate (3,4-DHPA). Catalyzes the reduction of free flavins (FMN, FAD and riboflavin) by NADH. Subsequently, the reduced flavins diffuse to the oxygenase component C2. The sequence is that of p-hydroxyphenylacetate 3-hydroxylase, reductase component from Acinetobacter baumannii.